The chain runs to 333 residues: tRNA dimethylallyltransferase (333 aa).

Residue 23 to 30 coordinates ATP; it reads GPTGAGKT. Position 25 to 30 (25 to 30) interacts with substrate; the sequence is TGAGKT. Interaction with substrate tRNA regions lie at residues 53-56 and 177-181; these read DSAL and QRVQR.

This sequence belongs to the IPP transferase family. In terms of assembly, monomer. The cofactor is Mg(2+).

The enzyme catalyses adenosine(37) in tRNA + dimethylallyl diphosphate = N(6)-dimethylallyladenosine(37) in tRNA + diphosphate. Functionally, catalyzes the transfer of a dimethylallyl group onto the adenine at position 37 in tRNAs that read codons beginning with uridine, leading to the formation of N6-(dimethylallyl)adenosine (i(6)A). The chain is tRNA dimethylallyltransferase from Polynucleobacter asymbioticus (strain DSM 18221 / CIP 109841 / QLW-P1DMWA-1) (Polynucleobacter necessarius subsp. asymbioticus).